We begin with the raw amino-acid sequence, 234 residues long: uncharacterized protein (234 aa).

A disordered region spans residues 65 to 89; it reads QNANRQEGRRRGLRPSSDGNLRREN. The RING-type zinc-finger motif lies at 185–220; that stretch reads CAVCLHNKVCVLFQKCKHVITCGPCSLRIKECPVCK.

This sequence belongs to the IIV-6 175R/332L family.

This is an uncharacterized protein from Acheta domesticus (House cricket).